A 276-amino-acid chain; its full sequence is Undecaprenyl-diphosphatase (276 aa).

8 helical membrane-spanning segments follow: residues 1–21 (MHWL…FLPV), 41–61 (LLLD…VFFA), 97–117 (ALLI…FHKI), 121–141 (LFAS…LLWA), 155–175 (VTWG…LPGI), 200–220 (FLLS…DASA), 231–251 (LGGI…LAIV), and 256–276 (LWWF…ANFV).

This sequence belongs to the UppP family.

It localises to the cell inner membrane. It carries out the reaction di-trans,octa-cis-undecaprenyl diphosphate + H2O = di-trans,octa-cis-undecaprenyl phosphate + phosphate + H(+). Its function is as follows. Catalyzes the dephosphorylation of undecaprenyl diphosphate (UPP). Confers resistance to bacitracin. This Desulfatibacillum aliphaticivorans protein is Undecaprenyl-diphosphatase.